The sequence spans 104 residues: Photosystem II reaction center Psb28 protein (104 aa).

Belongs to the Psb28 family. In terms of assembly, part of the photosystem II complex.

Its subcellular location is the cellular thylakoid membrane. The protein is Photosystem II reaction center Psb28 protein of Synechococcus sp. (strain JA-3-3Ab) (Cyanobacteria bacterium Yellowstone A-Prime).